Consider the following 465-residue polypeptide: Cysteine--tRNA ligase (465 aa).

Cys27 provides a ligand contact to Zn(2+). Residues Pro29–Asn39 carry the 'HIGH' region motif. Zn(2+) contacts are provided by Cys207, His232, and Glu236. Residues Lys264–Ser268 carry the 'KMSKS' region motif. Lys267 provides a ligand contact to ATP.

Belongs to the class-I aminoacyl-tRNA synthetase family. In terms of assembly, monomer. Zn(2+) is required as a cofactor.

It localises to the cytoplasm. It carries out the reaction tRNA(Cys) + L-cysteine + ATP = L-cysteinyl-tRNA(Cys) + AMP + diphosphate. In Clostridium botulinum (strain Loch Maree / Type A3), this protein is Cysteine--tRNA ligase.